A 480-amino-acid chain; its full sequence is Major capsid protein (480 aa).

It is found in the virion. Its function is as follows. Major protein of the capsid. The chain is Major capsid protein (MCP-1) from Trichoplusia ni ascovirus 2c (TnAV-2c).